Reading from the N-terminus, the 383-residue chain is Dual-specificity RNA methyltransferase RlmN (383 aa).

The active-site Proton acceptor is the E94. Residues 100–339 (DGDRATLCVS…VTVRRTRGDD (240 aa)) form the Radical SAM core domain. A disulfide bridge links C107 with C344. Positions 114, 118, and 121 each coordinate [4Fe-4S] cluster. S-adenosyl-L-methionine-binding positions include 168 to 169 (GE), S200, 222 to 224 (SLH), and N301. C344 (S-methylcysteine intermediate) is an active-site residue.

This sequence belongs to the radical SAM superfamily. RlmN family. [4Fe-4S] cluster is required as a cofactor.

The protein resides in the cytoplasm. The enzyme catalyses adenosine(2503) in 23S rRNA + 2 reduced [2Fe-2S]-[ferredoxin] + 2 S-adenosyl-L-methionine = 2-methyladenosine(2503) in 23S rRNA + 5'-deoxyadenosine + L-methionine + 2 oxidized [2Fe-2S]-[ferredoxin] + S-adenosyl-L-homocysteine. It catalyses the reaction adenosine(37) in tRNA + 2 reduced [2Fe-2S]-[ferredoxin] + 2 S-adenosyl-L-methionine = 2-methyladenosine(37) in tRNA + 5'-deoxyadenosine + L-methionine + 2 oxidized [2Fe-2S]-[ferredoxin] + S-adenosyl-L-homocysteine. In terms of biological role, specifically methylates position 2 of adenine 2503 in 23S rRNA and position 2 of adenine 37 in tRNAs. m2A2503 modification seems to play a crucial role in the proofreading step occurring at the peptidyl transferase center and thus would serve to optimize ribosomal fidelity. This chain is Dual-specificity RNA methyltransferase RlmN, found in Aliivibrio salmonicida (strain LFI1238) (Vibrio salmonicida (strain LFI1238)).